Consider the following 207-residue polypeptide: Large ribosomal subunit protein uL4 (207 aa).

The segment at 56–77 (FVSGGGKKPWRQKGTGRARHGS) is disordered. Over residues 63-77 (KPWRQKGTGRARHGS) the composition is skewed to basic residues.

This sequence belongs to the universal ribosomal protein uL4 family. Part of the 50S ribosomal subunit.

Functionally, one of the primary rRNA binding proteins, this protein initially binds near the 5'-end of the 23S rRNA. It is important during the early stages of 50S assembly. It makes multiple contacts with different domains of the 23S rRNA in the assembled 50S subunit and ribosome. Its function is as follows. Forms part of the polypeptide exit tunnel. This Phytoplasma australiense protein is Large ribosomal subunit protein uL4.